Consider the following 477-residue polypeptide: Bifunctional protein HldE (477 aa).

Residues 1–318 (MKVTLPEFER…ENAVRGRADT (318 aa)) are ribokinase. Position 179 is an N6-acetyllysine (K179). 195 to 198 (NLSE) lines the ATP pocket. Residue D264 is part of the active site. A cytidylyltransferase region spans residues 344–477 (MTNGVFDILH…IKKIQQDKKG (134 aa)).

It in the N-terminal section; belongs to the carbohydrate kinase PfkB family. This sequence in the C-terminal section; belongs to the cytidylyltransferase family. In terms of assembly, homodimer.

It carries out the reaction D-glycero-beta-D-manno-heptose 7-phosphate + ATP = D-glycero-beta-D-manno-heptose 1,7-bisphosphate + ADP + H(+). The catalysed reaction is D-glycero-beta-D-manno-heptose 1-phosphate + ATP + H(+) = ADP-D-glycero-beta-D-manno-heptose + diphosphate. It participates in nucleotide-sugar biosynthesis; ADP-L-glycero-beta-D-manno-heptose biosynthesis; ADP-L-glycero-beta-D-manno-heptose from D-glycero-beta-D-manno-heptose 7-phosphate: step 1/4. It functions in the pathway nucleotide-sugar biosynthesis; ADP-L-glycero-beta-D-manno-heptose biosynthesis; ADP-L-glycero-beta-D-manno-heptose from D-glycero-beta-D-manno-heptose 7-phosphate: step 3/4. In terms of biological role, catalyzes the phosphorylation of D-glycero-D-manno-heptose 7-phosphate at the C-1 position to selectively form D-glycero-beta-D-manno-heptose-1,7-bisphosphate. Functionally, catalyzes the ADP transfer from ATP to D-glycero-beta-D-manno-heptose 1-phosphate, yielding ADP-D-glycero-beta-D-manno-heptose. In Shigella flexneri serotype 5b (strain 8401), this protein is Bifunctional protein HldE.